Here is a 261-residue protein sequence, read N- to C-terminus: Pimeloyl-[acyl-carrier protein] methyl ester esterase (261 aa).

The AB hydrolase-1 domain maps to 16–241; the sequence is LVLIHGWGMN…QASHAPFISH (226 aa). Residues W22, 82–83, and 143–147 each bind substrate; these read SL and FMTLQ. The active-site Nucleophile is the S82. Catalysis depends on residues D207 and H235. H235 is a binding site for substrate.

This sequence belongs to the AB hydrolase superfamily. Carboxylesterase BioH family. As to quaternary structure, monomer.

It is found in the cytoplasm. It catalyses the reaction 6-carboxyhexanoyl-[ACP] methyl ester + H2O = 6-carboxyhexanoyl-[ACP] + methanol + H(+). It participates in cofactor biosynthesis; biotin biosynthesis. In terms of biological role, the physiological role of BioH is to remove the methyl group introduced by BioC when the pimeloyl moiety is complete. It allows to synthesize pimeloyl-ACP via the fatty acid synthetic pathway through the hydrolysis of the ester bonds of pimeloyl-ACP esters. This Aliivibrio salmonicida (strain LFI1238) (Vibrio salmonicida (strain LFI1238)) protein is Pimeloyl-[acyl-carrier protein] methyl ester esterase.